Here is a 314-residue protein sequence, read N- to C-terminus: Homoserine O-succinyltransferase (314 aa).

Cys142 serves as the catalytic Acyl-thioester intermediate. Lys163 and Ser192 together coordinate substrate. His235 serves as the catalytic Proton acceptor. Residue Glu237 is part of the active site. Residue Arg249 coordinates substrate.

It belongs to the MetA family.

The protein localises to the cytoplasm. The enzyme catalyses L-homoserine + succinyl-CoA = O-succinyl-L-homoserine + CoA. It functions in the pathway amino-acid biosynthesis; L-methionine biosynthesis via de novo pathway; O-succinyl-L-homoserine from L-homoserine: step 1/1. Its function is as follows. Transfers a succinyl group from succinyl-CoA to L-homoserine, forming succinyl-L-homoserine. This chain is Homoserine O-succinyltransferase, found in Shewanella pealeana (strain ATCC 700345 / ANG-SQ1).